Here is a 412-residue protein sequence, read N- to C-terminus: Candidapepsin-2 (412 aa).

Positions 1–25 form a signal peptide, or 18, or 21; that stretch reads MTTIAIFTKNVLLAIAFALFAQGAA. A propeptide spans 26-61 (activation peptide); that stretch reads IPDPAKRDDNPGFVALDFEVTRKPLDVNATSELSKR. Residue N53 is glycosylated (N-linked (GlcNAc...) asparagine). A Peptidase A1 domain is found at 75 to 383; sequence YGIRVSVGSN…LDKETVLSRS (309 aa). Residue D93 is part of the active site. C108 and C113 are joined by a disulfide. D273 is an active-site residue. C311 and C345 are disulfide-bonded.

This sequence belongs to the peptidase A1 family. O-glycosylated.

It localises to the secreted. It carries out the reaction Preferential cleavage at the carboxyl of hydrophobic amino acids, but fails to cleave 15-Leu-|-Tyr-16, 16-Tyr-|-Leu-17 and 24-Phe-|-Phe-25 of insulin B chain. Activates trypsinogen, and degrades keratin.. In Candida parapsilosis (Yeast), this protein is Candidapepsin-2 (SAPP2).